A 200-amino-acid chain; its full sequence is V-type proton ATPase subunit E (200 aa).

Belongs to the V-ATPase E subunit family.

Its function is as follows. Produces ATP from ADP in the presence of a proton gradient across the membrane. This chain is V-type proton ATPase subunit E, found in Thermoanaerobacter pseudethanolicus (strain ATCC 33223 / 39E) (Clostridium thermohydrosulfuricum).